Here is a 359-residue protein sequence, read N- to C-terminus: NADH-quinone oxidoreductase subunit H (359 aa).

8 consecutive transmembrane segments (helical) span residues 19 to 39 (IGWF…FIAL), 94 to 114 (FLFV…FAVL), 127 to 147 (VGLF…LAAG), 166 to 186 (IVSY…LAGT), 202 to 222 (FMHW…IYFI), 266 to 286 (MFMV…SPLP), 301 to 321 (VWGA…QMWL), and 337 to 357 (CWKV…IWVI).

This sequence belongs to the complex I subunit 1 family. As to quaternary structure, NDH-1 is composed of 14 different subunits. Subunits NuoA, H, J, K, L, M, N constitute the membrane sector of the complex.

It is found in the cell inner membrane. The enzyme catalyses a quinone + NADH + 5 H(+)(in) = a quinol + NAD(+) + 4 H(+)(out). Functionally, NDH-1 shuttles electrons from NADH, via FMN and iron-sulfur (Fe-S) centers, to quinones in the respiratory chain. The immediate electron acceptor for the enzyme in this species is believed to be ubiquinone. Couples the redox reaction to proton translocation (for every two electrons transferred, four hydrogen ions are translocated across the cytoplasmic membrane), and thus conserves the redox energy in a proton gradient. This subunit may bind ubiquinone. This chain is NADH-quinone oxidoreductase subunit H, found in Chlorobaculum parvum (strain DSM 263 / NCIMB 8327) (Chlorobium vibrioforme subsp. thiosulfatophilum).